A 313-amino-acid chain; its full sequence is 4-hydroxy-3-methylbut-2-enyl diphosphate reductase (313 aa).

Cysteine 14 contributes to the [4Fe-4S] cluster binding site. Residues histidine 43 and histidine 76 each coordinate (2E)-4-hydroxy-3-methylbut-2-enyl diphosphate. Residues histidine 43 and histidine 76 each coordinate dimethylallyl diphosphate. Residues histidine 43 and histidine 76 each coordinate isopentenyl diphosphate. A [4Fe-4S] cluster-binding site is contributed by cysteine 98. Histidine 126 is a (2E)-4-hydroxy-3-methylbut-2-enyl diphosphate binding site. Histidine 126 is a dimethylallyl diphosphate binding site. An isopentenyl diphosphate-binding site is contributed by histidine 126. Glutamate 128 (proton donor) is an active-site residue. Threonine 166 is a (2E)-4-hydroxy-3-methylbut-2-enyl diphosphate binding site. A [4Fe-4S] cluster-binding site is contributed by cysteine 196. (2E)-4-hydroxy-3-methylbut-2-enyl diphosphate contacts are provided by serine 224, serine 225, asparagine 226, and serine 269. Dimethylallyl diphosphate is bound by residues serine 224, serine 225, asparagine 226, and serine 269. Residues serine 224, serine 225, asparagine 226, and serine 269 each coordinate isopentenyl diphosphate.

Belongs to the IspH family. The cofactor is [4Fe-4S] cluster.

It carries out the reaction isopentenyl diphosphate + 2 oxidized [2Fe-2S]-[ferredoxin] + H2O = (2E)-4-hydroxy-3-methylbut-2-enyl diphosphate + 2 reduced [2Fe-2S]-[ferredoxin] + 2 H(+). The enzyme catalyses dimethylallyl diphosphate + 2 oxidized [2Fe-2S]-[ferredoxin] + H2O = (2E)-4-hydroxy-3-methylbut-2-enyl diphosphate + 2 reduced [2Fe-2S]-[ferredoxin] + 2 H(+). The protein operates within isoprenoid biosynthesis; dimethylallyl diphosphate biosynthesis; dimethylallyl diphosphate from (2E)-4-hydroxy-3-methylbutenyl diphosphate: step 1/1. It functions in the pathway isoprenoid biosynthesis; isopentenyl diphosphate biosynthesis via DXP pathway; isopentenyl diphosphate from 1-deoxy-D-xylulose 5-phosphate: step 6/6. Catalyzes the conversion of 1-hydroxy-2-methyl-2-(E)-butenyl 4-diphosphate (HMBPP) into a mixture of isopentenyl diphosphate (IPP) and dimethylallyl diphosphate (DMAPP). Acts in the terminal step of the DOXP/MEP pathway for isoprenoid precursor biosynthesis. This is 4-hydroxy-3-methylbut-2-enyl diphosphate reductase from Tropheryma whipplei (strain TW08/27) (Whipple's bacillus).